The chain runs to 276 residues: Anamorsin homolog (276 aa).

Positions 1–152 (MEPYVVDNLN…TRGSSIKLPW (152 aa)) are N-terminal SAM-like domain. Residues 152 to 189 (WAHSDIEAAWENVDNETSYDVDKNLINTNSLLQKSDYV) are linker. Cys195, Cys211, Cys214, and Cys216 together coordinate [2Fe-2S] cluster. The fe-S binding site A stretch occupies residues 195 to 216 (CGQEFAKNSIGKRKRACKNCTC). [4Fe-4S] cluster is bound by residues Cys237, Cys240, Cys248, and Cys251. 2 short sequence motifs (cx2C motif) span residues 237–240 (CGNC) and 248–251 (CSTC). The fe-S binding site B stretch occupies residues 237–251 (CGNCYLGDAFRCSTC).

The protein belongs to the anamorsin family. In terms of assembly, monomer. It depends on [2Fe-2S] cluster as a cofactor. The cofactor is [4Fe-4S] cluster.

Its subcellular location is the cytoplasm. It localises to the mitochondrion intermembrane space. In terms of biological role, component of the cytosolic iron-sulfur (Fe-S) protein assembly (CIA) machinery. Required for the maturation of extramitochondrial Fe-S proteins. Part of an electron transfer chain functioning in an early step of cytosolic Fe-S biogenesis, facilitating the de novo assembly of a [4Fe-4S] cluster on the cytosolic Fe-S scaffold complex. Electrons are transferred from NADPH via a FAD- and FMN-containing diflavin oxidoreductase. Together with the diflavin oxidoreductase, also required for the assembly of the diferric tyrosyl radical cofactor of ribonucleotide reductase (RNR), probably by providing electrons for reduction during radical cofactor maturation in the catalytic small subunit. The protein is Anamorsin homolog of Schistosoma japonicum (Blood fluke).